An 84-amino-acid polypeptide reads, in one-letter code: Small ribosomal subunit protein uS17 (84 aa).

It belongs to the universal ribosomal protein uS17 family. In terms of assembly, part of the 30S ribosomal subunit.

Functionally, one of the primary rRNA binding proteins, it binds specifically to the 5'-end of 16S ribosomal RNA. In Salmonella typhi, this protein is Small ribosomal subunit protein uS17.